The chain runs to 220 residues: Elongation factor Ts (220 aa).

An involved in Mg(2+) ion dislocation from EF-Tu region spans residues 83–86 (TDFV).

The protein belongs to the EF-Ts family.

Its subcellular location is the cytoplasm. Functionally, associates with the EF-Tu.GDP complex and induces the exchange of GDP to GTP. It remains bound to the aminoacyl-tRNA.EF-Tu.GTP complex up to the GTP hydrolysis stage on the ribosome. This Synechococcus sp. (strain CC9605) protein is Elongation factor Ts.